The sequence spans 58 residues: Succinate dehydrogenase subunit 8B, mitochondrial (58 aa).

As to quaternary structure, component of complex II composed of eight subunits in plants: four classical SDH subunits SDH1, SDH2, SDH3 and SDH4 (a flavoprotein (FP), an iron-sulfur protein (IP), and a cytochrome b composed of a large and a small subunit.), as well as four subunits unknown in mitochondria from bacteria and heterotrophic eukaryotes.

Its subcellular location is the mitochondrion inner membrane. The protein operates within carbohydrate metabolism; tricarboxylic acid cycle. The sequence is that of Succinate dehydrogenase subunit 8B, mitochondrial from Oryza sativa subsp. japonica (Rice).